A 311-amino-acid chain; its full sequence is Transcriptional regulatory protein MoaR1 (311 aa).

The ompR/PhoB-type DNA-binding region spans 15 to 117; that stretch reads LNATTAGAVQ…SEPPGYRLLI (103 aa).

This sequence belongs to the AfsR/DnrI/RedD regulatory family.

Its function is as follows. Acts as a positive transcriptional regulator of the molybdopterin biosynthesis moa1 locus, promoting the expression of the moaA1B1C1D1 genes. Binds directly to the moaA1 promoter. This Mycobacterium tuberculosis (strain ATCC 25618 / H37Rv) protein is Transcriptional regulatory protein MoaR1 (moaR1).